The primary structure comprises 459 residues: DIMBOA UDP-glucosyltransferase BX8 (459 aa).

The active-site Proton acceptor is the histidine 19. An an anthocyanidin-binding site is contributed by histidine 19. Aspartate 119 serves as the catalytic Charge relay. Residues threonine 141, alanine 340, glutamine 342, histidine 357, tryptophan 360, asparagine 361, serine 362, and glutamate 365 each contribute to the UDP-alpha-D-glucose site. An an anthocyanidin-binding site is contributed by glycine 380. Aspartate 381 and glutamine 382 together coordinate UDP-alpha-D-glucose.

The protein belongs to the UDP-glycosyltransferase family. The cofactor is Mg(2+). Requires Ca(2+) as cofactor. In terms of tissue distribution, expressed at the same levels in roots and shoots.

The catalysed reaction is DIMBOA + UDP-alpha-D-glucose = DIMBOA beta-D-glucoside + UDP + H(+). It carries out the reaction DIBOA + UDP-alpha-D-glucose = DIBOA beta-D-glucoside + UDP + H(+). In terms of biological role, glucosyltransferase involved in the last step of benzoxazinoid glucoside biosynthesis. Catalyzes the glucosylation of hydroxamic acids utilizing UDP-glucose as glucose doner, reducing the toxicity of these natural insecticides for storage. Can use DIMBOA and DIBOA as substrates, HMBOA (2-hydroxy-7-methoxy-2H-1,4-benzoxazin-3(4H)-one) and HBOA (2-hydroxy-2H-1,4-benzoxazin-3(4H)-one) with a lower efficiency, but not indole acetic acid or quercitin. This chain is DIMBOA UDP-glucosyltransferase BX8 (Bx8), found in Zea mays (Maize).